A 682-amino-acid polypeptide reads, in one-letter code: Elongation factor G (682 aa).

A tr-type G domain is found at 8 to 282 (QKFRNFGIMA…AVVDYLPSPV (275 aa)). Residues 17 to 24 (AHIDAGKT), 81 to 85 (DTPGH), and 135 to 138 (NKMD) each bind GTP.

The protein belongs to the TRAFAC class translation factor GTPase superfamily. Classic translation factor GTPase family. EF-G/EF-2 subfamily.

The protein localises to the cytoplasm. Its function is as follows. Catalyzes the GTP-dependent ribosomal translocation step during translation elongation. During this step, the ribosome changes from the pre-translocational (PRE) to the post-translocational (POST) state as the newly formed A-site-bound peptidyl-tRNA and P-site-bound deacylated tRNA move to the P and E sites, respectively. Catalyzes the coordinated movement of the two tRNA molecules, the mRNA and conformational changes in the ribosome. In Malacoplasma penetrans (strain HF-2) (Mycoplasma penetrans), this protein is Elongation factor G.